A 385-amino-acid chain; its full sequence is Probable tRNA sulfurtransferase (385 aa).

One can recognise a THUMP domain in the interval 57-161; that stretch reads NESIKRLSNV…NKNAYVWSNK (105 aa). Residues 181–182, 206–207, R263, G285, and Q294 contribute to the ATP site; these read ML and YY.

It belongs to the ThiI family.

The protein resides in the cytoplasm. It carries out the reaction [ThiI sulfur-carrier protein]-S-sulfanyl-L-cysteine + a uridine in tRNA + 2 reduced [2Fe-2S]-[ferredoxin] + ATP + H(+) = [ThiI sulfur-carrier protein]-L-cysteine + a 4-thiouridine in tRNA + 2 oxidized [2Fe-2S]-[ferredoxin] + AMP + diphosphate. The catalysed reaction is [ThiS sulfur-carrier protein]-C-terminal Gly-Gly-AMP + S-sulfanyl-L-cysteinyl-[cysteine desulfurase] + AH2 = [ThiS sulfur-carrier protein]-C-terminal-Gly-aminoethanethioate + L-cysteinyl-[cysteine desulfurase] + A + AMP + 2 H(+). It participates in cofactor biosynthesis; thiamine diphosphate biosynthesis. Its function is as follows. Catalyzes the ATP-dependent transfer of a sulfur to tRNA to produce 4-thiouridine in position 8 of tRNAs, which functions as a near-UV photosensor. Also catalyzes the transfer of sulfur to the sulfur carrier protein ThiS, forming ThiS-thiocarboxylate. This is a step in the synthesis of thiazole, in the thiamine biosynthesis pathway. The sulfur is donated as persulfide by IscS. In Clostridium botulinum (strain Alaska E43 / Type E3), this protein is Probable tRNA sulfurtransferase.